The primary structure comprises 133 residues: Small ribosomal subunit protein uS8 (133 aa).

It belongs to the universal ribosomal protein uS8 family. Part of the 30S ribosomal subunit. Contacts proteins S5 and S12.

In terms of biological role, one of the primary rRNA binding proteins, it binds directly to 16S rRNA central domain where it helps coordinate assembly of the platform of the 30S subunit. The chain is Small ribosomal subunit protein uS8 from Crocosphaera subtropica (strain ATCC 51142 / BH68) (Cyanothece sp. (strain ATCC 51142)).